We begin with the raw amino-acid sequence, 243 residues long: 3-deoxy-manno-octulosonate cytidylyltransferase (243 aa).

This sequence belongs to the KdsB family.

It is found in the cytoplasm. It catalyses the reaction 3-deoxy-alpha-D-manno-oct-2-ulosonate + CTP = CMP-3-deoxy-beta-D-manno-octulosonate + diphosphate. It functions in the pathway nucleotide-sugar biosynthesis; CMP-3-deoxy-D-manno-octulosonate biosynthesis; CMP-3-deoxy-D-manno-octulosonate from 3-deoxy-D-manno-octulosonate and CTP: step 1/1. The protein operates within bacterial outer membrane biogenesis; lipopolysaccharide biosynthesis. Activates KDO (a required 8-carbon sugar) for incorporation into bacterial lipopolysaccharide in Gram-negative bacteria. In Bartonella henselae (strain ATCC 49882 / DSM 28221 / CCUG 30454 / Houston 1) (Rochalimaea henselae), this protein is 3-deoxy-manno-octulosonate cytidylyltransferase.